Reading from the N-terminus, the 543-residue chain is 2,3-bisphosphoglycerate-independent phosphoglycerate mutase (543 aa).

The Mn(2+) site is built by Asp-24 and Ser-74. Ser-74 (phosphoserine intermediate) is an active-site residue. Residues His-135, 165–166, Arg-197, Arg-203, 268–271, and Lys-341 contribute to the substrate site; these read RD and RPDR. Positions 408, 412, 449, 450, and 467 each coordinate Mn(2+).

Belongs to the BPG-independent phosphoglycerate mutase family. Monomer. Requires Mn(2+) as cofactor.

It carries out the reaction (2R)-2-phosphoglycerate = (2R)-3-phosphoglycerate. It functions in the pathway carbohydrate degradation; glycolysis; pyruvate from D-glyceraldehyde 3-phosphate: step 3/5. Catalyzes the interconversion of 2-phosphoglycerate and 3-phosphoglycerate. This is 2,3-bisphosphoglycerate-independent phosphoglycerate mutase from Parasynechococcus marenigrum (strain WH8102).